Here is a 545-residue protein sequence, read N- to C-terminus: Chaperonin GroEL (545 aa).

ATP is bound by residues 30–33 (TMGP), K51, 87–91 (DGTTT), G415, and D494.

The protein belongs to the chaperonin (HSP60) family. As to quaternary structure, forms a cylinder of 14 subunits composed of two heptameric rings stacked back-to-back. Interacts with the co-chaperonin GroES.

Its subcellular location is the cytoplasm. The enzyme catalyses ATP + H2O + a folded polypeptide = ADP + phosphate + an unfolded polypeptide.. Its function is as follows. Together with its co-chaperonin GroES, plays an essential role in assisting protein folding. The GroEL-GroES system forms a nano-cage that allows encapsulation of the non-native substrate proteins and provides a physical environment optimized to promote and accelerate protein folding. The protein is Chaperonin GroEL of Helicobacter hepaticus (strain ATCC 51449 / 3B1).